The primary structure comprises 200 residues: MGNLFARKRRSRVTEQDKAVLQLKQQRDKLKQYQKKITLQLQRERELAKQLLHDGKKEKAKLLLKKKRYQEQLLEKTDNQISNLEKMVDDIEFAQIEMKVIEGLKVGNEWLKKMHEVMSIEEVEKIMEETQEGIEYQRQIDEMLSGSLTAEDEEAILEELEAITQEDLELPEAPSEPLSDTVPEKQAVKNRPKPQLVAAS.

Residue Gly2 is the site of N-myristoyl glycine attachment. Residues 9-102 are a coiled coil; that stretch reads RRSRVTEQDK…FAQIEMKVIE (94 aa). Residues 165–200 form a disordered region; that stretch reads QEDLELPEAPSEPLSDTVPEKQAVKNRPKPQLVAAS. The Type-2 MIT-interacting motif signature appears at 168-179; sequence LELPEAPSEPLS.

Belongs to the SNF7 family. Probable core component of the endosomal sorting required for transport complex III (ESCRT-III). ESCRT-III components are thought to multimerize to form a flat lattice on the perimeter membrane of the endosome.

It localises to the endomembrane system. The protein localises to the late endosome membrane. Probable core component of the endosomal sorting required for transport complex III (ESCRT-III) which is involved in multivesicular bodies (MVBs) formation and sorting of endosomal cargo proteins into MVBs. MVBs contain intraluminal vesicles (ILVs) that are generated by invagination and scission from the limiting membrane of the endosome and mostly are delivered to lysosomes enabling degradation of membrane proteins, such as stimulated growth factor receptors, lysosomal enzymes and lipids. In the ESCRT-III complex, it probably serves as an acceptor for the ESCRT-II complex on endosomal membranes. The polypeptide is Charged multivesicular body protein 6-B (chmp6-b) (Xenopus laevis (African clawed frog)).